We begin with the raw amino-acid sequence, 655 residues long: Fructose-1,6-bisphosphatase class 3 (655 aa).

Belongs to the FBPase class 3 family. Mn(2+) serves as cofactor.

The enzyme catalyses beta-D-fructose 1,6-bisphosphate + H2O = beta-D-fructose 6-phosphate + phosphate. Its pathway is carbohydrate biosynthesis; gluconeogenesis. This chain is Fructose-1,6-bisphosphatase class 3, found in Porphyromonas gingivalis (strain ATCC BAA-308 / W83).